The chain runs to 356 residues: Probable G-protein coupled receptor 32 (356 aa).

Residues 1 to 44 (MNGVSEGTRGCSDRQPGVLTRDRSCSRKMNSSGCLSEEVGSLRP) are Extracellular-facing. N30 is a glycosylation site (N-linked (GlcNAc...) asparagine). Residues 45–67 (LTVVILSASIVVGVLGNGLVLWM) traverse the membrane as a helical segment. At 68 to 78 (TVFRMARTVST) the chain is on the cytoplasmic side. A helical membrane pass occupies residues 79–100 (VCFFHLALADFMLSLSLPIAMY). The Extracellular segment spans residues 101 to 116 (YIVSRQWLLGEWACKL). C114 and C191 are oxidised to a cystine. A helical transmembrane segment spans residues 117–137 (YITFVFLSYFASNCLLVFISV). At 138–156 (DRCISVLYPVWALNHRTVQ) the chain is on the cytoplasmic side. The chain crosses the membrane as a helical span at residues 157–178 (RASWLAFGVWLLAAALCSAHLK). Residues 179–220 (FRTTRKWNGCTHCYLAFNSDNETAQIWIEGVVEGHIIGTIGH) lie on the Extracellular side of the membrane. N199 carries N-linked (GlcNAc...) asparagine glycosylation. Residues 221 to 241 (FLLGFLGPLAIIGTCAHLIRA) form a helical membrane-spanning segment. Over 242–257 (KLLREGWVHANRPKRL) the chain is Cytoplasmic. A helical transmembrane segment spans residues 258–280 (LLVLVSAFFIFWSPFNVVLLVHL). At 281–300 (WRRVMLKEIYHPRMLLILQA) the chain is on the extracellular side. Residues 301–320 (SFALGCVNSSLNPFLYVFVG) form a helical membrane-spanning segment. Residues 321-356 (RDFQEKFFQSLTSALARAFGEEEFLSSCPRGNAPRE) are Cytoplasmic-facing.

The protein belongs to the G-protein coupled receptor 1 family. Expressed in resting primary human macrophages.

It localises to the cell membrane. G-protein coupled receptor that binds to several ligands including resolvin D1 (RvD1) with high affinity, leading to rapid and transient activation of numerous intracellular signaling pathways. In macrophages, enhances the RvD1-stimulated phagocytic and clearance functions. Macrophages migrate less toward different chemoattractant stimuli but phagocytose more microbial particles. Prevents the increase in Ca(2+) and activation of ERK1/2 used by histamine and its H1 receptor subtype to induce goblet cell secretion by activating PKC and GRK2 to counter-regulate the histamine receptor. The protein is Probable G-protein coupled receptor 32 (GPR32) of Homo sapiens (Human).